The following is a 179-amino-acid chain: Large ribosomal subunit protein uL6 (179 aa).

The protein belongs to the universal ribosomal protein uL6 family. As to quaternary structure, part of the 50S ribosomal subunit.

Its function is as follows. This protein binds to the 23S rRNA, and is important in its secondary structure. It is located near the subunit interface in the base of the L7/L12 stalk, and near the tRNA binding site of the peptidyltransferase center. The protein is Large ribosomal subunit protein uL6 of Pelodictyon phaeoclathratiforme (strain DSM 5477 / BU-1).